The primary structure comprises 34 residues: Small ribosomal subunit protein uS2c (34 aa).

It belongs to the universal ribosomal protein uS2 family.

It localises to the plastid. It is found in the chloroplast. In Ochrosphaera neapolitana, this protein is Small ribosomal subunit protein uS2c (rps2).